Reading from the N-terminus, the 139-residue chain is Small ribosomal subunit protein uS12 (139 aa).

A 3-methylthioaspartic acid modification is found at Asp-102.

This sequence belongs to the universal ribosomal protein uS12 family. As to quaternary structure, part of the 30S ribosomal subunit. Contacts proteins S8 and S17. May interact with IF1 in the 30S initiation complex.

In terms of biological role, with S4 and S5 plays an important role in translational accuracy. Functionally, interacts with and stabilizes bases of the 16S rRNA that are involved in tRNA selection in the A site and with the mRNA backbone. Located at the interface of the 30S and 50S subunits, it traverses the body of the 30S subunit contacting proteins on the other side and probably holding the rRNA structure together. The combined cluster of proteins S8, S12 and S17 appears to hold together the shoulder and platform of the 30S subunit. This chain is Small ribosomal subunit protein uS12, found in Phytoplasma australiense.